Here is a 385-residue protein sequence, read N- to C-terminus: S-adenosylmethionine synthase (385 aa).

ATP is bound at residue histidine 14. Aspartate 16 provides a ligand contact to Mg(2+). Residue glutamate 42 participates in K(+) binding. 2 residues coordinate L-methionine: glutamate 55 and glutamine 98. The tract at residues 98 to 108 (QSGDIAQAVDN) is flexible loop. Residues 165–167 (DAK), 232–233 (RF), aspartate 241, 247–248 (RK), alanine 264, and lysine 268 contribute to the ATP site. L-methionine is bound at residue aspartate 241. L-methionine is bound at residue lysine 272.

Belongs to the AdoMet synthase family. As to quaternary structure, homotetramer; dimer of dimers. It depends on Mg(2+) as a cofactor. K(+) is required as a cofactor.

The protein resides in the cytoplasm. It carries out the reaction L-methionine + ATP + H2O = S-adenosyl-L-methionine + phosphate + diphosphate. It functions in the pathway amino-acid biosynthesis; S-adenosyl-L-methionine biosynthesis; S-adenosyl-L-methionine from L-methionine: step 1/1. Functionally, catalyzes the formation of S-adenosylmethionine (AdoMet) from methionine and ATP. The overall synthetic reaction is composed of two sequential steps, AdoMet formation and the subsequent tripolyphosphate hydrolysis which occurs prior to release of AdoMet from the enzyme. In Leuconostoc mesenteroides subsp. mesenteroides (strain ATCC 8293 / DSM 20343 / BCRC 11652 / CCM 1803 / JCM 6124 / NCDO 523 / NBRC 100496 / NCIMB 8023 / NCTC 12954 / NRRL B-1118 / 37Y), this protein is S-adenosylmethionine synthase.